Consider the following 372-residue polypeptide: N-acetylneuraminate epimerase 1 (372 aa).

The first 25 residues, 1-25, serve as a signal peptide directing secretion; it reads MITMKVKNFIYLPFCLFIGTSVAGA. Kelch repeat units lie at residues 44-88, 90-141, 143-177, 178-223, 226-269, 291-340, and 342-371; these read KIYI…TIID, KIYV…FIHN, HAVS…KVNR, DYFS…IFAE, IYIL…VSGA, EKYS…PWQG, and MLIL…IKIV. Glu232 functions as the Proton acceptor in the catalytic mechanism.

The protein belongs to the NanM family. Homodimer.

The protein resides in the periplasm. It catalyses the reaction N-acetyl-alpha-neuraminate = N-acetyl-beta-neuraminate. Converts alpha-N-acetylneuranimic acid (Neu5Ac) to the beta-anomer, accelerating the equilibrium between the alpha- and beta-anomers. Probably facilitates sialidase-negative bacteria to compete successfully for limited amounts of extracellular Neu5Ac, which is likely taken up in the beta-anomer. In addition, the rapid removal of sialic acid from solution might be advantageous to the bacterium to damp down host responses. In Escherichia coli O6:H1 (strain CFT073 / ATCC 700928 / UPEC), this protein is N-acetylneuraminate epimerase 1.